Consider the following 255-residue polypeptide: tRNA pseudouridine synthase A (255 aa).

Residue aspartate 52 is the Nucleophile of the active site. Position 111 (tyrosine 111) interacts with substrate.

It belongs to the tRNA pseudouridine synthase TruA family. Homodimer.

The catalysed reaction is uridine(38/39/40) in tRNA = pseudouridine(38/39/40) in tRNA. Functionally, formation of pseudouridine at positions 38, 39 and 40 in the anticodon stem and loop of transfer RNAs. The polypeptide is tRNA pseudouridine synthase A (Cereibacter sphaeroides (strain ATCC 17029 / ATH 2.4.9) (Rhodobacter sphaeroides)).